Here is a 173-residue protein sequence, read N- to C-terminus: Membrane protein PM19L (173 aa).

Helical transmembrane passes span 9–29, 43–63, 83–103, and 124–144; these read IAPL…FASW, GVAG…AGVV, LAAG…AFGL, and FVII…GGLF.

As to expression, expressed in roots, leaf blades, leaf sheaths, stems, spikelets and embryos.

Its subcellular location is the membrane. Its function is as follows. May be involved in abiotic stress response through abscisic acid-dependent signaling. The sequence is that of Membrane protein PM19L from Oryza sativa subsp. japonica (Rice).